The primary structure comprises 188 residues: Adenine phosphoribosyltransferase (188 aa).

The protein belongs to the purine/pyrimidine phosphoribosyltransferase family. Homodimer.

Its subcellular location is the cytoplasm. It carries out the reaction AMP + diphosphate = 5-phospho-alpha-D-ribose 1-diphosphate + adenine. It functions in the pathway purine metabolism; AMP biosynthesis via salvage pathway; AMP from adenine: step 1/1. Its function is as follows. Catalyzes a salvage reaction resulting in the formation of AMP, that is energically less costly than de novo synthesis. The protein is Adenine phosphoribosyltransferase of Neisseria meningitidis serogroup C (strain 053442).